Here is a 414-residue protein sequence, read N- to C-terminus: Putative L-lactate dehydrogenase (414 aa).

The FMN hydroxy acid dehydrogenase domain occupies 29 to 406 (RRLGAALTIQ…SPRHVTQLRR (378 aa)). Position 55 (Y55) interacts with a 2-oxocarboxylate. 2 residues coordinate FMN: S137 and Q159. Residue Y161 participates in a 2-oxocarboxylate binding. T187 contributes to the FMN binding site. Residue R196 coordinates a 2-oxocarboxylate. Position 277 (K277) interacts with FMN. The active-site Proton acceptor is the H301. R304 contributes to the a 2-oxocarboxylate binding site. FMN is bound by residues 332 to 336 (DTGIM) and 355 to 356 (GR).

Belongs to the FMN-dependent alpha-hydroxy acid dehydrogenase family. FMN serves as cofactor.

It catalyses the reaction (S)-lactate + A = pyruvate + AH2. The polypeptide is Putative L-lactate dehydrogenase (lldD) (Mycobacterium tuberculosis (strain ATCC 25618 / H37Rv)).